Reading from the N-terminus, the 557-residue chain is Tektin-5 (557 aa).

Positions 302-386 form a coiled coil; it reads DNIRHAQNMR…LLERAIVAKE (85 aa). 6 tandem repeats follow at residues 507-512, 513-518, 519-524, 525-530, 531-536, and 537-541. The 6 X 6 AA approximate tandem repeats of C-[GSK]-G-[GSPH]-A-[SLP] stretch occupies residues 507-541; sequence CSGSALCKGPASCGGGASCGGGASCGGHAPCGSAL.

This sequence belongs to the tektin family. As to quaternary structure, microtubule inner protein component of sperm flagellar doublet microtubules. Interacts with TEKT3. In terms of processing, ubiquitinated, leading to its degradation. Deubiquitinated by USP16, promoting its stability. As to expression, strongly expressed in germ cells of the testis (at protein level). Expressed in spermatozoa. Also detected in brain.

It localises to the cytoplasm. Its subcellular location is the cytoskeleton. The protein resides in the flagellum axoneme. Functionally, sperm-specific microtubule inner protein (MIP) part of the dynein-decorated doublet microtubules (DMTs) in flagellar axoneme. Forms an extensive interaction network in different conformations that reinforces the helix bundle composed by other tektin proteins (TEKT1 to TEKT4) and MIPs to anchor the tektin bundle onto the tubulin wall of A-tubule of the sperm flagellum. This chain is Tektin-5, found in Mus musculus (Mouse).